The chain runs to 431 residues: MASTRSNARLIRFGIFALVLIGCGYILTRGSSFQPPNYQQTQSPAAHEKQTGNVAAGGGAGSGSAGAQVPLGKNRGPIPKAIMGAGEGGSDAPVPQQDIPDSYTLNDKIKATFVTLARNSDLYSLAESIRHVEDRFNKKFHYDWVFLNDEEFNDEFKETVGSLVSGNTKFGLIPKEHWSYPPWIDQEKAALVREQMREKKIIYGHSESYRHMCRFESGFFWRQEILNDYDYYWRVEPDIKLYCDIDYDIFKWMKDNNKDYAFTISLPEYKETIPTLWDTTKEFIEKNPQYLAQNNLMDWVSDDKGQTYNGCHFWSNFEIGSLAFWRSEAYRKYFEHLDKAGGFFYERWGDAPVHSIAAALFLPREKIHFFEDVGYYHVPFTNCPVDKEVRKARNCNCDPNKDFTWRGYSCTTKYYTLNNFKRQKGWEKYTA.

The Cytoplasmic portion of the chain corresponds to 1 to 9 (MASTRSNAR). Residues 10–28 (LIRFGIFALVLIGCGYILT) traverse the membrane as a helical; Signal-anchor for type II membrane protein segment. At 29–431 (RGSSFQPPNY…RQKGWEKYTA (403 aa)) the chain is on the lumenal side. Over residues 35–44 (PPNYQQTQSP) the composition is skewed to polar residues. The disordered stretch occupies residues 35–73 (PPNYQQTQSPAAHEKQTGNVAAGGGAGSGSAGAQVPLGK). Residues 55-64 (AAGGGAGSGS) are compositionally biased toward gly residues. Glutamate 318 (nucleophile) is an active-site residue.

It belongs to the glycosyltransferase 15 family.

Its subcellular location is the golgi apparatus membrane. The protein operates within protein modification; protein glycosylation. In terms of biological role, involved in O-glycosylation of cell wall and secreted proteins. Transfers an alpha-D-mannosyl residue from GDP-mannose into lipid-linked oligosaccharide, forming an alpha-(1-&gt;2)-D-mannosyl-D-mannose linkage. Mainly responsible for the addition of the second mannose residue in an O-linked mannose pentamer. Can also substitute for MNT2 by adding the third mannose residue. Important for adherence to host surfaces and for virulence. The polypeptide is Glycolipid 2-alpha-mannosyltransferase 1 (MNT1) (Candida albicans (strain SC5314 / ATCC MYA-2876) (Yeast)).